The chain runs to 618 residues: UvrABC system protein C (618 aa).

The GIY-YIG domain occupies 13–92; it reads DKPGVYLMKN…IKKYRPKYNI (80 aa). A UVR domain is found at 204 to 239; it reads LDIVENFKLNMEKAAGNLEFEKAAMLRDKINIIEKI.

Belongs to the UvrC family. As to quaternary structure, interacts with UvrB in an incision complex.

The protein localises to the cytoplasm. Its function is as follows. The UvrABC repair system catalyzes the recognition and processing of DNA lesions. UvrC both incises the 5' and 3' sides of the lesion. The N-terminal half is responsible for the 3' incision and the C-terminal half is responsible for the 5' incision. This is UvrABC system protein C from Clostridium botulinum (strain 657 / Type Ba4).